The chain runs to 246 residues: Small ribosomal subunit protein uS2 (246 aa).

It belongs to the universal ribosomal protein uS2 family.

This Burkholderia pseudomallei (strain 668) protein is Small ribosomal subunit protein uS2.